Reading from the N-terminus, the 214-residue chain is Ribonuclease HII (214 aa).

An RNase H type-2 domain is found at 26-214 (EIVCGVDEAG…PVREAFDLIR (189 aa)). Residues D32, E33, and D124 each coordinate a divalent metal cation.

The protein belongs to the RNase HII family. Mn(2+) is required as a cofactor. Mg(2+) serves as cofactor.

The protein resides in the cytoplasm. The enzyme catalyses Endonucleolytic cleavage to 5'-phosphomonoester.. Its function is as follows. Endonuclease that specifically degrades the RNA of RNA-DNA hybrids. This is Ribonuclease HII from Burkholderia mallei (strain NCTC 10247).